The primary structure comprises 192 residues: Nucleoside triphosphate pyrophosphatase (192 aa).

Catalysis depends on D73, which acts as the Proton acceptor.

It belongs to the Maf family. A divalent metal cation is required as a cofactor.

It is found in the cytoplasm. The enzyme catalyses a ribonucleoside 5'-triphosphate + H2O = a ribonucleoside 5'-phosphate + diphosphate + H(+). The catalysed reaction is a 2'-deoxyribonucleoside 5'-triphosphate + H2O = a 2'-deoxyribonucleoside 5'-phosphate + diphosphate + H(+). Its function is as follows. Nucleoside triphosphate pyrophosphatase. May have a dual role in cell division arrest and in preventing the incorporation of modified nucleotides into cellular nucleic acids. The polypeptide is Nucleoside triphosphate pyrophosphatase (Ehrlichia chaffeensis (strain ATCC CRL-10679 / Arkansas)).